The following is a 239-amino-acid chain: Ribonuclease PH (239 aa).

Phosphate is bound by residues Arg-86 and 124 to 126 (GTR).

It belongs to the RNase PH family. In terms of assembly, homohexameric ring arranged as a trimer of dimers.

It carries out the reaction tRNA(n+1) + phosphate = tRNA(n) + a ribonucleoside 5'-diphosphate. Functionally, phosphorolytic 3'-5' exoribonuclease that plays an important role in tRNA 3'-end maturation. Removes nucleotide residues following the 3'-CCA terminus of tRNAs; can also add nucleotides to the ends of RNA molecules by using nucleoside diphosphates as substrates, but this may not be physiologically important. Probably plays a role in initiation of 16S rRNA degradation (leading to ribosome degradation) during starvation. The protein is Ribonuclease PH of Rhizobium etli (strain ATCC 51251 / DSM 11541 / JCM 21823 / NBRC 15573 / CFN 42).